The following is a 79-amino-acid chain: Conotoxin Vi6.4 (79 aa).

The signal sequence occupies residues 1–22; that stretch reads MKLTCVLIITVLFLTASQLITA. Positions 23-47 are excised as a propeptide; the sequence is DYSGDKRQYRAVRLRDEMRNFKGAR. 3 disulfide bridges follow: Cys-49-Cys-62, Cys-56-Cys-67, and Cys-61-Cys-77. 2 positions are modified to 4-hydroxyproline: Pro-60 and Pro-63.

It belongs to the conotoxin O1 superfamily. As to expression, expressed by the venom duct.

The protein localises to the secreted. In terms of biological role, ion channel inhibitor that inhibits the increase in intracellular calcium upon depolarization in DRG neurons. In vivo, both intraperitoneal and intracranial injections into mice induce hyperactivity. This Conus virgo (Virgin cone) protein is Conotoxin Vi6.4.